We begin with the raw amino-acid sequence, 360 residues long: Glycerol-3-phosphate dehydrogenase [NAD(+)], cytoplasmic (360 aa).

Residues 11-16, F98, K121, and A155 contribute to the NAD(+) site; that span reads GSGNWG. Position 121 (K121) interacts with substrate. Catalysis depends on K206, which acts as the Proton acceptor. 2 residues coordinate NAD(+): R270 and Q299. Position 270–271 (270–271) interacts with substrate; sequence RN.

The protein belongs to the NAD-dependent glycerol-3-phosphate dehydrogenase family. In terms of assembly, homodimer.

It is found in the cytoplasm. It carries out the reaction sn-glycerol 3-phosphate + NAD(+) = dihydroxyacetone phosphate + NADH + H(+). It functions in the pathway phospholipid metabolism; alpha-glycerophosphate cycle. The chain is Glycerol-3-phosphate dehydrogenase [NAD(+)], cytoplasmic (Gpdh1) from Drosophila kanekoi (Fruit fly).